Consider the following 338-residue polypeptide: Ketol-acid reductoisomerase (NADP(+)) (338 aa).

Residues 1–181 (MKVFYDKDAD…GGGRAGIIET (181 aa)) enclose the KARI N-terminal Rossmann domain. NADP(+) is bound by residues 24–27 (YGSQ), R47, and S52. Residue H107 is part of the active site. G133 is an NADP(+) binding site. One can recognise a KARI C-terminal knotted domain in the interval 182 to 327 (NFREETETDL…AKLRSMMPWI (146 aa)). Positions 190, 194, 226, and 230 each coordinate Mg(2+). S251 is a substrate binding site.

This sequence belongs to the ketol-acid reductoisomerase family. Mg(2+) serves as cofactor.

It carries out the reaction (2R)-2,3-dihydroxy-3-methylbutanoate + NADP(+) = (2S)-2-acetolactate + NADPH + H(+). It catalyses the reaction (2R,3R)-2,3-dihydroxy-3-methylpentanoate + NADP(+) = (S)-2-ethyl-2-hydroxy-3-oxobutanoate + NADPH + H(+). Its pathway is amino-acid biosynthesis; L-isoleucine biosynthesis; L-isoleucine from 2-oxobutanoate: step 2/4. It participates in amino-acid biosynthesis; L-valine biosynthesis; L-valine from pyruvate: step 2/4. Functionally, involved in the biosynthesis of branched-chain amino acids (BCAA). Catalyzes an alkyl-migration followed by a ketol-acid reduction of (S)-2-acetolactate (S2AL) to yield (R)-2,3-dihydroxy-isovalerate. In the isomerase reaction, S2AL is rearranged via a Mg-dependent methyl migration to produce 3-hydroxy-3-methyl-2-ketobutyrate (HMKB). In the reductase reaction, this 2-ketoacid undergoes a metal-dependent reduction by NADPH to yield (R)-2,3-dihydroxy-isovalerate. This is Ketol-acid reductoisomerase (NADP(+)) from Paraburkholderia phytofirmans (strain DSM 17436 / LMG 22146 / PsJN) (Burkholderia phytofirmans).